The following is a 313-amino-acid chain: Nodulation protein D 3 (313 aa).

In terms of domain architecture, HTH lysR-type spans L6–T63. A DNA-binding region (H-T-H motif) is located at residues V23 to A42.

It belongs to the LysR transcriptional regulatory family.

Its function is as follows. NodD regulates the expression of the nodABCFE genes which encode other nodulation proteins. NodD is also a negative regulator of its own expression. Binds flavonoids as inducers. The sequence is that of Nodulation protein D 3 (nodD3) from Rhizobium meliloti (strain 1021) (Ensifer meliloti).